The following is a 301-amino-acid chain: uncharacterized protein (301 aa).

In terms of domain architecture, FHA spans Y27–L85. The disordered stretch occupies residues T187–S236. S204 carries the post-translational modification Phosphoserine. Residues K216 to L226 are compositionally biased toward basic and acidic residues. S231 carries the phosphoserine modification.

In terms of assembly, interacts with sad1.

The protein resides in the nucleus. This is an uncharacterized protein from Schizosaccharomyces pombe (strain 972 / ATCC 24843) (Fission yeast).